Consider the following 200-residue polypeptide: dITP/XTP pyrophosphatase (200 aa).

8 to 13 (TRNAGK) contributes to the substrate binding site. Residue D72 is the Proton acceptor of the active site. D72 serves as a coordination point for Mg(2+). Residues S73, 155–158 (FGYD), K178, and 183–184 (HR) contribute to the substrate site.

Belongs to the HAM1 NTPase family. As to quaternary structure, homodimer. It depends on Mg(2+) as a cofactor.

It carries out the reaction XTP + H2O = XMP + diphosphate + H(+). The catalysed reaction is dITP + H2O = dIMP + diphosphate + H(+). The enzyme catalyses ITP + H2O = IMP + diphosphate + H(+). Its function is as follows. Pyrophosphatase that catalyzes the hydrolysis of nucleoside triphosphates to their monophosphate derivatives, with a high preference for the non-canonical purine nucleotides XTP (xanthosine triphosphate), dITP (deoxyinosine triphosphate) and ITP. Seems to function as a house-cleaning enzyme that removes non-canonical purine nucleotides from the nucleotide pool, thus preventing their incorporation into DNA/RNA and avoiding chromosomal lesions. The sequence is that of dITP/XTP pyrophosphatase from Streptomyces coelicolor (strain ATCC BAA-471 / A3(2) / M145).